We begin with the raw amino-acid sequence, 201 residues long: Protein FAR-RED-ELONGATED HYPOCOTYL 1-LIKE (201 aa).

Positions 32-35 (KKRK) match the Nuclear localization sequence (NLS) motif. A Nuclear export sequence (NES) motif is present at residues 43–46 (LLPL).

Belongs to the FHY1 protein family. As to quaternary structure, homodimer and heterodimer with FHY1. Interacts with PHYA, especially upon far-red (FR) light illumination. Binds to LAF1 and HFR1. Post-translationally, inactivated by rapid reversible PHYA-mediated phosphorylation.

It is found in the nucleus. It localises to the cytoplasm. Can activate transcription. Essential for light-regulated PHYA nuclear accumulation and subsequent PHYA phototropic signaling processes. PHYA-specific signal transducer in response to continuous FR lights. Mediates the association of PHYA with HFR1 and LAF1 in the nucleus in response to FR conditions. Contributes to inhibition of hypocotyl elongation in continuous blue light (B). This chain is Protein FAR-RED-ELONGATED HYPOCOTYL 1-LIKE, found in Arabidopsis thaliana (Mouse-ear cress).